The chain runs to 230 residues: Flagellar L-ring protein (230 aa).

The N-terminal stretch at 1–22 (MSPLSNFARTALACAVAALLGG) is a signal peptide. Cys23 is lipidated: N-palmitoyl cysteine. A lipid anchor (S-diacylglycerol cysteine) is attached at Cys23.

Belongs to the FlgH family. In terms of assembly, the basal body constitutes a major portion of the flagellar organelle and consists of four rings (L,P,S, and M) mounted on a central rod.

The protein resides in the cell outer membrane. The protein localises to the bacterial flagellum basal body. Assembles around the rod to form the L-ring and probably protects the motor/basal body from shearing forces during rotation. This chain is Flagellar L-ring protein, found in Stenotrophomonas maltophilia (strain R551-3).